The sequence spans 101 residues: Small ribosomal subunit protein bS18c (101 aa).

A compositionally biased stretch (basic residues) spans 1-19 (MNKSKRPFTKSKRSFRRRL). Positions 1-23 (MNKSKRPFTKSKRSFRRRLPPIQ) are disordered.

Belongs to the bacterial ribosomal protein bS18 family. In terms of assembly, part of the 30S ribosomal subunit.

Its subcellular location is the plastid. It localises to the chloroplast. This Draba nemorosa (Woodland whitlowgrass) protein is Small ribosomal subunit protein bS18c.